The following is a 319-amino-acid chain: Cutinase cut1 (319 aa).

Residues 1–58 form the signal peptide; it reads MPPHAARPGPAQNRRGRAMAVITPRRERSSLLSRALRFTAAAATALVTAVSLAAPAHA. Poly(ethylene terephthalate) is bound at residue Y118. S188 functions as the Nucleophile in the catalytic mechanism. Residues M189 and W213 each coordinate poly(ethylene terephthalate). Residues D234 and H266 each act as charge relay system in the active site. The cysteines at positions 299 and 317 are disulfide-linked.

The protein belongs to the AB hydrolase superfamily.

The protein resides in the secreted. It is found in the periplasm. The catalysed reaction is an acetyl ester + H2O = an aliphatic alcohol + acetate + H(+). It carries out the reaction a butanoate ester + H2O = an aliphatic alcohol + butanoate + H(+). The enzyme catalyses pentanoate ester + H2O = pentanoate + an aliphatic alcohol + H(+). It catalyses the reaction an octanoate ester + H2O = an aliphatic alcohol + octanoate + H(+). The catalysed reaction is decanoate ester + H2O = decanoate + an aliphatic alcohol + H(+). It carries out the reaction a dodecanoate ester + H2O = an aliphatic alcohol + dodecanoate + H(+). The enzyme catalyses a tetradecanoate ester + H2O = an aliphatic alcohol + tetradecanoate + H(+). It catalyses the reaction hexadecanoate ester + H2O = an aliphatic alcohol + hexadecanoate + H(+). The catalysed reaction is cutin + H2O = cutin monomers.. It carries out the reaction (ethylene terephthalate)(n) + H2O = (ethylene terephthalate)(n-1) + 4-[(2-hydroxyethoxy)carbonyl]benzoate + H(+). With respect to regulation, activated by magnesium ions. Activated by calcium ions. Catalyzes the hydrolysis of cutin, a polyester that forms the structure of plant cuticle. Shows esterase activity towards p-nitrophenol-linked aliphatic esters (pNP-aliphatic esters). Capable of degrading the plastic poly(ethylene terephthalate) (PET), the most abundant polyester plastic in the world. The protein is Cutinase cut1 of Thermobifida fusca (Thermomonospora fusca).